A 363-amino-acid polypeptide reads, in one-letter code: Phosphoserine aminotransferase (363 aa).

An L-glutamate-binding site is contributed by R41. Pyridoxal 5'-phosphate-binding positions include A75–S76, W100, T155, D175, and Q198. K199 carries the N6-(pyridoxal phosphate)lysine modification. N239–T240 is a binding site for pyridoxal 5'-phosphate.

The protein belongs to the class-V pyridoxal-phosphate-dependent aminotransferase family. SerC subfamily. As to quaternary structure, homodimer. Pyridoxal 5'-phosphate is required as a cofactor.

Its subcellular location is the cytoplasm. It catalyses the reaction O-phospho-L-serine + 2-oxoglutarate = 3-phosphooxypyruvate + L-glutamate. It carries out the reaction 4-(phosphooxy)-L-threonine + 2-oxoglutarate = (R)-3-hydroxy-2-oxo-4-phosphooxybutanoate + L-glutamate. It participates in amino-acid biosynthesis; L-serine biosynthesis; L-serine from 3-phospho-D-glycerate: step 2/3. Functionally, catalyzes the reversible conversion of 3-phosphohydroxypyruvate to phosphoserine and of 3-hydroxy-2-oxo-4-phosphonooxybutanoate to phosphohydroxythreonine. This Streptococcus suis (strain 98HAH33) protein is Phosphoserine aminotransferase.